Reading from the N-terminus, the 245-residue chain is 3-oxoacyl-[acyl-carrier-protein] reductase FabG (245 aa).

NADP(+)-binding positions include 12–15 and threonine 38; that span reads GANR. Residues lysine 51 and glycine 54 each contribute to the Ca(2+) site. NADP(+)-binding positions include 60 to 61 and asparagine 87; that span reads DI. Serine 139 is a substrate binding site. Asparagine 146 contributes to the Ca(2+) binding site. Residue tyrosine 152 is the Proton acceptor of the active site. NADP(+) contacts are provided by residues 152 to 156 and isoleucine 185; that span reads YSAAK. Ca(2+)-binding residues include glutamine 234 and valine 235.

The protein belongs to the short-chain dehydrogenases/reductases (SDR) family. In terms of assembly, homotetramer.

It catalyses the reaction a (3R)-hydroxyacyl-[ACP] + NADP(+) = a 3-oxoacyl-[ACP] + NADPH + H(+). It participates in lipid metabolism; fatty acid biosynthesis. Functionally, catalyzes the NADPH-dependent reduction of beta-ketoacyl-ACP substrates to beta-hydroxyacyl-ACP products, the first reductive step in the elongation cycle of fatty acid biosynthesis. The sequence is that of 3-oxoacyl-[acyl-carrier-protein] reductase FabG (fabG) from Buchnera aphidicola subsp. Baizongia pistaciae (strain Bp).